We begin with the raw amino-acid sequence, 969 residues long: Rab3 GTPase-activating protein catalytic subunit (969 aa).

The span at 532 to 549 (DDGKKSSSSDGARDRSRG) shows a compositional bias: basic and acidic residues. The disordered stretch occupies residues 532–613 (DDGKKSSSSD…PEGRLQPHGT (82 aa)). Residues 550 to 572 (APEGAGPEGAGPAEAAGKSWDSW) show a composition bias toward low complexity. Positions 573–589 (SDSEDEFFECVSDTEEM) are enriched in acidic residues. The span at 590 to 608 (KEDKEEAENRSRSKPEGRL) shows a compositional bias: basic and acidic residues.

It belongs to the Rab3-GAP catalytic subunit family. In terms of assembly, the Rab3 GTPase-activating complex is a heterodimer composed of rab3gap1 and rab3gap2. The Rab3 GTPase-activating complex interacts with DMXL2. Interacts with LMAN1.

It localises to the cytoplasm. The protein localises to the endoplasmic reticulum. It is found in the golgi apparatus. The protein resides in the cis-Golgi network. In terms of biological role, catalytic subunit of the Rab3 GTPase-activating (Rab3GAP) complex composed of rab3gap1 and rab3gap2, which has GTPase-activating protein (GAP) activity towards various Rab3 subfamily members (RAB3A, RAB3B, RAB3C and RAB3D), RAB5A and RAB43, and guanine nucleotide exchange factor (GEF) activity towards RAB18. As part of the Rab3GAP complex, acts as a GAP for Rab3 proteins by converting active RAB3-GTP to the inactive form RAB3-GDP. Rab3 proteins are involved in regulated exocytosis of neurotransmitters and hormones. The Rab3GAP complex, acts as a GEF for RAB18 by promoting the conversion of inactive RAB18-GDP to the active form RAB18-GTP. Recruits and stabilizes RAB18 at the cis-Golgi membrane where RAB18 is most likely activated. Also involved in RAB18 recruitment at the endoplasmic reticulum (ER) membrane where it maintains proper ER structure. Required for normal eye and brain development. May participate in neurodevelopmental processes such as proliferation, migration and differentiation before synapse formation, and non-synaptic vesicular release of neurotransmitters. The sequence is that of Rab3 GTPase-activating protein catalytic subunit (rab3gap1) from Danio rerio (Zebrafish).